A 244-amino-acid chain; its full sequence is tRNA (guanine-N(7)-)-methyltransferase (244 aa).

S-adenosyl-L-methionine-binding residues include Glu75, Glu100, Asp127, and Asp150. Asp150 is a catalytic residue. Residues Lys154, Asp186, and 223–226 each bind substrate; that span reads TRFE.

This sequence belongs to the class I-like SAM-binding methyltransferase superfamily. TrmB family.

The enzyme catalyses guanosine(46) in tRNA + S-adenosyl-L-methionine = N(7)-methylguanosine(46) in tRNA + S-adenosyl-L-homocysteine. It functions in the pathway tRNA modification; N(7)-methylguanine-tRNA biosynthesis. Catalyzes the formation of N(7)-methylguanine at position 46 (m7G46) in tRNA. The sequence is that of tRNA (guanine-N(7)-)-methyltransferase from Xylella fastidiosa (strain 9a5c).